We begin with the raw amino-acid sequence, 156 residues long: MPRRREVPKRDVLPDPKFGNVEVAKFMNVLMLDGKKSVAERIVYGAFDQIEKKAGKAPIEVFSVAINNVKPVVEVKSRRVGGANYQVPVEVRPSRRLALAMRWLREAAKKRSEKSMALRLAGELLEASEGRGGAMKKRDEVHRMAEANKAFSHFRF.

It belongs to the universal ribosomal protein uS7 family. As to quaternary structure, part of the 30S ribosomal subunit. Contacts proteins S9 and S11.

Its function is as follows. One of the primary rRNA binding proteins, it binds directly to 16S rRNA where it nucleates assembly of the head domain of the 30S subunit. Is located at the subunit interface close to the decoding center, probably blocks exit of the E-site tRNA. The chain is Small ribosomal subunit protein uS7 from Cupriavidus necator (strain ATCC 17699 / DSM 428 / KCTC 22496 / NCIMB 10442 / H16 / Stanier 337) (Ralstonia eutropha).